A 102-amino-acid polypeptide reads, in one-letter code: Small ribosomal subunit protein uS10 (102 aa).

This sequence belongs to the universal ribosomal protein uS10 family. As to quaternary structure, part of the 30S ribosomal subunit.

Involved in the binding of tRNA to the ribosomes. The sequence is that of Small ribosomal subunit protein uS10 from Lactobacillus gasseri (strain ATCC 33323 / DSM 20243 / BCRC 14619 / CIP 102991 / JCM 1131 / KCTC 3163 / NCIMB 11718 / NCTC 13722 / AM63).